Consider the following 235-residue polypeptide: Phosphoribosylaminoimidazole-succinocarboxamide synthase (235 aa).

The protein belongs to the SAICAR synthetase family.

The enzyme catalyses 5-amino-1-(5-phospho-D-ribosyl)imidazole-4-carboxylate + L-aspartate + ATP = (2S)-2-[5-amino-1-(5-phospho-beta-D-ribosyl)imidazole-4-carboxamido]succinate + ADP + phosphate + 2 H(+). Its pathway is purine metabolism; IMP biosynthesis via de novo pathway; 5-amino-1-(5-phospho-D-ribosyl)imidazole-4-carboxamide from 5-amino-1-(5-phospho-D-ribosyl)imidazole-4-carboxylate: step 1/2. In Chlorobium chlorochromatii (strain CaD3), this protein is Phosphoribosylaminoimidazole-succinocarboxamide synthase.